The chain runs to 210 residues: MPTLLVVEASPRGEQSISRGLTKMFVNQWKREQHDGRVIQRDLMATDLPFVTMPWLGAYFTPPEHQTQDMKNLLRLSDELVAEILSADHIVIGTPVYNYNVPAVLKAYIDHIVRKGKTLGFSGEGLVKGKACTIVMASGGAYTPDSPIRDRDIATGYLRLILKVIGIEDVTVIAGGNAKAVDMGEISRSDFLEAFASDMADAAARPVVQV.

Residues Ser-10 and 16–18 each bind FMN; that span reads SIS.

Belongs to the azoreductase type 1 family. As to quaternary structure, homodimer. Requires FMN as cofactor.

The enzyme catalyses 2 a quinone + NADH + H(+) = 2 a 1,4-benzosemiquinone + NAD(+). The catalysed reaction is N,N-dimethyl-1,4-phenylenediamine + anthranilate + 2 NAD(+) = 2-(4-dimethylaminophenyl)diazenylbenzoate + 2 NADH + 2 H(+). Its function is as follows. Quinone reductase that provides resistance to thiol-specific stress caused by electrophilic quinones. In terms of biological role, also exhibits azoreductase activity. Catalyzes the reductive cleavage of the azo bond in aromatic azo compounds to the corresponding amines. This is FMN-dependent NADH:quinone oxidoreductase 8 from Burkholderia lata (strain ATCC 17760 / DSM 23089 / LMG 22485 / NCIMB 9086 / R18194 / 383).